A 166-amino-acid polypeptide reads, in one-letter code: Ribosome maturation factor RimM (166 aa).

Residues 94 to 166 (EDEFYITDLN…AILNYKRDEL (73 aa)) enclose the PRC barrel domain.

It belongs to the RimM family. As to quaternary structure, binds ribosomal protein uS19.

The protein localises to the cytoplasm. An accessory protein needed during the final step in the assembly of 30S ribosomal subunit, possibly for assembly of the head region. Essential for efficient processing of 16S rRNA. May be needed both before and after RbfA during the maturation of 16S rRNA. It has affinity for free ribosomal 30S subunits but not for 70S ribosomes. This Rickettsia bellii (strain RML369-C) protein is Ribosome maturation factor RimM.